The sequence spans 78 residues: Delta-conotoxin-like Ai6.1 (78 aa).

Residues 1–22 (MKLTCVMIVAVLFLTAWTFATA) form the signal peptide. Positions 23-49 (DDPRNGLGNLFSNAHHEMKNPEASKLN) are excised as a propeptide. Cystine bridges form between cysteine 53–cysteine 68, cysteine 60–cysteine 72, and cysteine 67–cysteine 77.

It belongs to the conotoxin O1 superfamily. In terms of tissue distribution, expressed by the venom duct.

It localises to the secreted. In terms of biological role, delta-conotoxins bind to site 6 of voltage-gated sodium channels (Nav) and inhibit the inactivation process. In Conus ammiralis (Admiral cone), this protein is Delta-conotoxin-like Ai6.1.